A 2617-amino-acid polypeptide reads, in one-letter code: DNA-directed RNA polymerase subunit beta'' (2617 aa).

Cys-263, Cys-334, Cys-341, and Cys-344 together coordinate Zn(2+).

It belongs to the RNA polymerase beta' chain family. RpoC2 subfamily. In plastids the minimal PEP RNA polymerase catalytic core is composed of four subunits: alpha, beta, beta', and beta''. When a (nuclear-encoded) sigma factor is associated with the core the holoenzyme is formed, which can initiate transcription. It depends on Zn(2+) as a cofactor.

The protein localises to the plastid. Its subcellular location is the chloroplast. It carries out the reaction RNA(n) + a ribonucleoside 5'-triphosphate = RNA(n+1) + diphosphate. DNA-dependent RNA polymerase catalyzes the transcription of DNA into RNA using the four ribonucleoside triphosphates as substrates. This is DNA-directed RNA polymerase subunit beta'' from Oedogonium cardiacum (Filamentous green alga).